We begin with the raw amino-acid sequence, 459 residues long: Polycomb protein mes-6 (459 aa).

WD repeat units follow at residues 146–186 (SVGW…CLIV), 192–231 (CHAGTILSVDWSTDGDFILSCGFDHQLMEWDLSVKQVKEH), 305–346 (MHSD…GEVE), 370–409 (SGSAWFIKFAVDPRRRWLVCGGAGGSVMFFDLRNNEETNP), and 415–454 (VGSRTVRQASFSTCGRFLVLVTDEGFVCRFDRVSASVDAK).

Belongs to the WD repeat ESC family. Interacts directly with the N-terminal domain of mes-2. Forms a heterotrimeric complex with mes-2 and mes-3. Does not interact with mes-4. As to expression, in adults, it is predominantly expressed in the germline, and weakly expressed in intestinal cells.

It is found in the nucleus. Functionally, polycomb group (PcG) protein. PcG proteins act by forming multiprotein complexes, which are required to maintain the transcriptionally repressive state of homeotic genes throughout development. In association with the nfya-1-NF-Y complex, may play a role in repressing the expression of the homeobox protein egl-5 in tissues such as the head. PcG proteins are not required to initiate repression, but to maintain it during later stages of development. The mes-2/mes-3/mes-6 complex may participate in the global inactivation of the X chromosomes in germline cells. The complex may act via methylation of histone H3 'Lys-27', rendering chromatin heritably changed in its expressibility. This complex is required to exclude mes-4 from the inactivated X-chromosomes in germline cells. Required for small-RNA-induced H3K27 trimethylation. The polypeptide is Polycomb protein mes-6 (Caenorhabditis elegans).